The primary structure comprises 843 residues: Glycogen phosphorylase, brain form (843 aa).

A2 carries the post-translational modification N-acetylalanine. Residue S15 is modified to Phosphoserine; by PHK; in form phosphorylase A. Positions 43, 197, and 310 each coordinate AMP. Y197 is modified (phosphotyrosine). Y473 bears the Phosphotyrosine mark. K569 is a binding site for pyridoxal 5'-phosphate. Positions 677–678 (TG) are pyridoxal 5'-phosphate. Residue K681 is modified to N6-(pyridoxal phosphate)lysine.

This sequence belongs to the glycogen phosphorylase family. As to quaternary structure, homodimer. Dimers associate into a tetramer to form the enzymatically active phosphorylase A. It depends on pyridoxal 5'-phosphate as a cofactor. Post-translationally, phosphorylation of Ser-15 converts phosphorylase B (unphosphorylated) to phosphorylase A.

It carries out the reaction [(1-&gt;4)-alpha-D-glucosyl](n) + phosphate = [(1-&gt;4)-alpha-D-glucosyl](n-1) + alpha-D-glucose 1-phosphate. With respect to regulation, activity of phosphorylase is controlled both by allosteric means (through the non-covalent binding of metabolites) and by covalent modification. Thus AMP allosterically activates, whereas ATP, ADP, and glucose-6-phosphate allosterically inhibit, phosphorylase B. Functionally, glycogen phosphorylase that regulates glycogen mobilization. Phosphorylase is an important allosteric enzyme in carbohydrate metabolism. Enzymes from different sources differ in their regulatory mechanisms and in their natural substrates. However, all known phosphorylases share catalytic and structural properties. This is Glycogen phosphorylase, brain form (PYGB) from Ovis aries (Sheep).